The following is a 212-amino-acid chain: Pyridoxine/pyridoxamine 5'-phosphate oxidase (212 aa).

Substrate contacts are provided by residues 8-11 (RTDY) and K66. Residues 61–66 (RIVLLK), 76–77 (FT), K83, and Q105 each bind FMN. Substrate is bound by residues Y123, R127, and S131. FMN is bound by residues 140–141 (QS) and W184. 190–192 (RLH) serves as a coordination point for substrate. R194 is a binding site for FMN.

It belongs to the pyridoxamine 5'-phosphate oxidase family. In terms of assembly, homodimer. FMN serves as cofactor.

It carries out the reaction pyridoxamine 5'-phosphate + O2 + H2O = pyridoxal 5'-phosphate + H2O2 + NH4(+). The enzyme catalyses pyridoxine 5'-phosphate + O2 = pyridoxal 5'-phosphate + H2O2. The protein operates within cofactor metabolism; pyridoxal 5'-phosphate salvage; pyridoxal 5'-phosphate from pyridoxamine 5'-phosphate: step 1/1. It participates in cofactor metabolism; pyridoxal 5'-phosphate salvage; pyridoxal 5'-phosphate from pyridoxine 5'-phosphate: step 1/1. Its function is as follows. Catalyzes the oxidation of either pyridoxine 5'-phosphate (PNP) or pyridoxamine 5'-phosphate (PMP) into pyridoxal 5'-phosphate (PLP). This chain is Pyridoxine/pyridoxamine 5'-phosphate oxidase, found in Ralstonia pickettii (strain 12J).